The primary structure comprises 760 residues: Catecholate siderophore receptor Fiu (760 aa).

Residues 1 to 31 (MENNRNFPARQFHSLTFFAGLCIGITPVAQA) form the signal peptide. One can recognise a TBDR plug domain in the interval 67-175 (PVADTTRTMT…PTGSINMISK (109 aa)). The TBDR beta-barrel domain occupies 180 to 760 (DSGIDASASI…TFLLTANMHF (581 aa)). A TonB C-terminal box motif is present at residues 743–760 (RYHPGEPRTFLLTANMHF).

Belongs to the TonB-dependent receptor family.

It is found in the cell outer membrane. Functionally, involved in the active transport across the outer membrane of iron complexed with catecholate siderophores such as dihydroxybenzoylserine and dihydroxybenzoate. It derives its energy for transport by interacting with the trans-periplasmic membrane protein TonB. Can also transport catechol-substituted cephalosporins. Receptor for microcins M, H47 and E492. The sequence is that of Catecholate siderophore receptor Fiu (fiu) from Escherichia coli O6:H1 (strain CFT073 / ATCC 700928 / UPEC).